The following is a 263-amino-acid chain: Phosphatidylglycerol--prolipoprotein diacylglyceryl transferase (263 aa).

The next 4 helical transmembrane spans lie at 7–27, 50–70, 85–105, and 112–132; these read IFSI…LGIV, LLTA…VLIY, TWKG…AVII, and IPIF…LFLG. Residue R133 coordinates a 1,2-diacyl-sn-glycero-3-phospho-(1'-sn-glycerol). 3 helical membrane passes run 169 to 189, 197 to 217, and 233 to 253; these read LYEA…LFFL, GTLT…VEFF, and MGQL…LSAL.

Belongs to the Lgt family.

It is found in the cell membrane. The catalysed reaction is L-cysteinyl-[prolipoprotein] + a 1,2-diacyl-sn-glycero-3-phospho-(1'-sn-glycerol) = an S-1,2-diacyl-sn-glyceryl-L-cysteinyl-[prolipoprotein] + sn-glycerol 1-phosphate + H(+). Its pathway is protein modification; lipoprotein biosynthesis (diacylglyceryl transfer). In terms of biological role, catalyzes the transfer of the diacylglyceryl group from phosphatidylglycerol to the sulfhydryl group of the N-terminal cysteine of a prolipoprotein, the first step in the formation of mature lipoproteins. The polypeptide is Phosphatidylglycerol--prolipoprotein diacylglyceryl transferase (Wolbachia sp. subsp. Brugia malayi (strain TRS)).